Reading from the N-terminus, the 3101-residue chain is Probable polyketide synthase 32 (3101 aa).

In terms of domain architecture, Ketosynthase family 3 (KS3) spans 27–465 (SGDVAVIGIG…GSNVCLILSE (439 aa)). Residues C199, H338, and H388 each act as for beta-ketoacyl synthase activity in the active site. An acyl/malonyl transferase region spans residues 664-697 (GVSADIIIGHSLGEVSSAYCSGMIDFETLCYLTY). The active-site For acyl/malonyl transferase activity is the S674. The tract at residues 965–1087 (GPSINNLGNN…GNFSLTKHNS (123 aa)) is N-terminal hotdog fold. The PKS/mFAS DH domain occupies 965 to 1287 (GPSINNLGNN…CTLVSLPNPE (323 aa)). The active-site Proton acceptor; for dehydratase activity is the H999. Residues 1104-1287 (NFTSISKQDL…CTLVSLPNPE (184 aa)) are C-terminal hotdog fold. D1176 serves as the catalytic Proton donor; for dehydratase activity. A disordered region spans residues 1209–1236 (KNGNNNDDDEESNNNNNNNNNNNNNNNN). A compositionally biased stretch (low complexity) spans 1221–1236 (NNNNNNNNNNNNNNNN). The region spanning 2550–2627 (DNNEIIRSTI…QSIEIIKSAN (78 aa)) is the Carrier domain. S2587 is subject to O-(pantetheine 4'-phosphoryl)serine. The interval 2627–2648 (NNKNNKNNNNNNNNKTNKNNNN) is disordered.

It depends on pantetheine 4'-phosphate as a cofactor.

In terms of biological role, probable polyketide synthase. The sequence is that of Probable polyketide synthase 32 (pks32) from Dictyostelium discoideum (Social amoeba).